Consider the following 134-residue polypeptide: MDEKTLAKMIEAVNKHMPEKTRSLAEMLKEKDPTIRAKDGNEYYIEKRELEFIAQHVDELDWPRFRIPVILEMNDIGGERVIYVRDKLHAEFIKRAFGFDRVLNGILTLYMYELPQIRRKLRTASQVIFRISLK.

This sequence belongs to the UPF0216 family.

This Archaeoglobus fulgidus (strain ATCC 49558 / DSM 4304 / JCM 9628 / NBRC 100126 / VC-16) protein is UPF0216 protein AF_0460.